Here is a 428-residue protein sequence, read N- to C-terminus: Histone deacetylase 3 (428 aa).

The histone deacetylase stretch occupies residues 3 to 316 (KTVAYFYDPD…WTYETSLLVE (314 aa)). Residues H17, G21, and K25 each coordinate 1D-myo-inositol 1,4,5,6-tetrakisphosphate. Residue H135 is part of the active site. Zn(2+) is bound by residues D170, H172, and D259. Residue R265 participates in 1D-myo-inositol 1,4,5,6-tetrakisphosphate binding. Basic and acidic residues-rich tracts occupy residues 388-405 (DRTDEADAEERGPEENYS) and 415-428 (DGDHDNDKESDVEI). A disordered region spans residues 388-428 (DRTDEADAEERGPEENYSRPEAPNEFYDGDHDNDKESDVEI). Residue S424 is modified to Phosphoserine.

Belongs to the histone deacetylase family. HD type 1 subfamily. As to quaternary structure, interacts with HDAC7 and HDAC9. Interacts with DAXX, KDM4A, HDAC10 and DACH1. Found in a complex with NCOR1 and NCOR2. Component of the N-Cor repressor complex, at least composed of NCOR1, NCOR2, HDAC3, TBL1X, TBL1R, CORO2A and GPS2. Interacts with BCOR, MJD2A/JHDM3A, NRIP1, PRDM6 and SRY. Interacts with BTBD14B. Interacts with GLIS2. Interacts (via the DNA-binding domain) with NR2C1; the interaction recruits phosphorylated NR2C1 to PML bodies for sumoylation. Component of the Notch corepressor complex. Interacts with CBFA2T3 and NKAP. Interacts with APEX1; the interaction is not dependent on the acetylated status of APEX1. Interacts with ZMYND15. Interacts with SMRT/NCOR2 and BCL6 on DNA enhancer elements. Interacts with INSM1. Interacts with XBP1 isoform 1; the interaction occurs in endothelial cell (EC) under disturbed flow. Interacts (via C-terminus) with CCAR2 (via N-terminus). Interacts with and deacetylates MEF2D. Interacts with BEND3. Interacts with NKAPL. Interacts with DHX36; this interaction occurs in a RNA-dependent manner. Interacts weakly with CRY1; this interaction is enhanced in the presence of FBXL3. Interacts with FBXL3 and BMAL1. Interacts with NCOR1. Interacts with RARA. Interacts with SETD5. In terms of processing, sumoylated in vitro. Post-translationally, deubiquitinated on 'Lys-63'-linked ubiquitin chains by USP38; leading to a decreased level of histone acetylation.

It is found in the nucleus. It localises to the chromosome. The protein localises to the cytoplasm. Its subcellular location is the cytosol. The catalysed reaction is N(6)-acetyl-L-lysyl-[histone] + H2O = L-lysyl-[histone] + acetate. The enzyme catalyses N(6)-acetyl-L-lysyl-[protein] + H2O = L-lysyl-[protein] + acetate. It carries out the reaction N(6)-(2E)-butenoyl-L-lysyl-[protein] + H2O = (2E)-2-butenoate + L-lysyl-[protein]. It catalyses the reaction N(6)-(2-hydroxyisobutanoyl)-L-lysyl-[protein] + H2O = 2-hydroxy-2-methylpropanoate + L-lysyl-[protein]. The catalysed reaction is N(6)-[(S)-lactoyl]-L-lysyl-[protein] + H2O = (S)-lactate + L-lysyl-[protein]. With respect to regulation, inositol tetraphosphate (1D-myo-inositol 1,4,5,6-tetrakisphosphate) promotes the histone deacetylase activity by acting as an intermolecular glue between HDAC3 and NCOR2, thereby promoting its association with the N-Cor complex, a prerequisite for the histone deacetylase activity. Histone deacetylase that catalyzes the deacetylation of lysine residues on the N-terminal part of the core histones (H2A, H2B, H3 and H4), and some other non-histone substrates. Histone deacetylation gives a tag for epigenetic repression and plays an important role in transcriptional regulation, cell cycle progression and developmental events. Histone deacetylases act via the formation of large multiprotein complexes, such as N-Cor repressor complex, which activate the histone deacetylase activity. Participates in the BCL6 transcriptional repressor activity by deacetylating the H3 'Lys-27' (H3K27) on enhancer elements, antagonizing EP300 acetyltransferase activity and repressing proximal gene expression. Acts as a molecular chaperone for shuttling phosphorylated NR2C1 to PML bodies for sumoylation. Contributes, together with XBP1 isoform 1, to the activation of NFE2L2-mediated HMOX1 transcription factor gene expression in a PI(3)K/mTORC2/Akt-dependent signaling pathway leading to endothelial cell (EC) survival under disturbed flow/oxidative stress. Regulates both the transcriptional activation and repression phases of the circadian clock in a deacetylase activity-independent manner. During the activation phase, promotes the accumulation of ubiquitinated BMAL1 at the E-boxes and during the repression phase, blocks FBXL3-mediated CRY1/2 ubiquitination and promotes the interaction of CRY1 and BMAL1. The NCOR1-HDAC3 complex regulates the circadian expression of the core clock gene BMAL1 and the genes involved in lipid metabolism in the liver. Also functions as deacetylase for non-histone targets, such as KAT5, MEF2D, MAPK14, RARA and STAT3. Serves as a corepressor of RARA, mediating its deacetylation and repression, leading to inhibition of RARE DNA element binding. In addition to protein deacetylase activity, also acts as a protein-lysine deacylase by recognizing other acyl groups: catalyzes removal of (2E)-butenoyl (crotonyl), lactoyl (lactyl) and 2-hydroxyisobutanoyl (2-hydroxyisobutyryl) acyl groups from lysine residues, leading to protein decrotonylation, delactylation and de-2-hydroxyisobutyrylation, respectively. Catalyzes decrotonylation of MAPRE1/EB1. Mediates delactylation NBN/NBS1, thereby inhibiting DNA double-strand breaks (DSBs) via homologous recombination (HR). This chain is Histone deacetylase 3, found in Mus musculus (Mouse).